The primary structure comprises 244 residues: Type III pantothenate kinase (244 aa).

Asp8 to Lys15 serves as a coordination point for ATP. Residues Tyr88 and Gly94–Arg97 each bind substrate. The Proton acceptor role is filled by Asp96. Residue Asp117 participates in K(+) binding. Thr120 lines the ATP pocket. Thr175 is a substrate binding site.

It belongs to the type III pantothenate kinase family. In terms of assembly, homodimer. NH4(+) serves as cofactor. Requires K(+) as cofactor.

It is found in the cytoplasm. The enzyme catalyses (R)-pantothenate + ATP = (R)-4'-phosphopantothenate + ADP + H(+). It functions in the pathway cofactor biosynthesis; coenzyme A biosynthesis; CoA from (R)-pantothenate: step 1/5. Its function is as follows. Catalyzes the phosphorylation of pantothenate (Pan), the first step in CoA biosynthesis. This chain is Type III pantothenate kinase, found in Porphyromonas gingivalis (strain ATCC BAA-308 / W83).